The chain runs to 241 residues: Tetrahydromethanopterin S-methyltransferase subunit A (241 aa).

Residues 1–220 (MAEKKEPAEG…HSGVLAGKIE (220 aa)) lie on the Cytoplasmic side of the membrane. His85 provides a ligand contact to 5-hydroxybenzimidazolylcob(I)amide. The chain crosses the membrane as a helical span at residues 221-241 (GIMVGLVLSLFVLGLLLFGGM).

It belongs to the MtrA family. The complex is composed of 8 subunits; MtrA, MtrB, MtrC, MtrD, MtrE, MtrF, MtrG and MtrH. Requires 5-hydroxybenzimidazolylcob(I)amide as cofactor.

The protein resides in the cell membrane. It carries out the reaction 5-methyl-5,6,7,8-tetrahydromethanopterin + coenzyme M + 2 Na(+)(in) = 5,6,7,8-tetrahydromethanopterin + methyl-coenzyme M + 2 Na(+)(out). It participates in one-carbon metabolism; methanogenesis from CO(2); methyl-coenzyme M from 5,10-methylene-5,6,7,8-tetrahydromethanopterin: step 2/2. Functionally, part of a complex that catalyzes the formation of methyl-coenzyme M and tetrahydromethanopterin from coenzyme M and methyl-tetrahydromethanopterin. This is an energy-conserving, sodium-ion translocating step. The polypeptide is Tetrahydromethanopterin S-methyltransferase subunit A (Methanohalobium evestigatum (strain ATCC BAA-1072 / DSM 3721 / NBRC 107634 / OCM 161 / Z-7303)).